Reading from the N-terminus, the 480-residue chain is Thyroid receptor-interacting protein 6 (480 aa).

Residues 1 to 12 (MSGPTWLPPKQP) are compositionally biased toward pro residues. The segment at 1–43 (MSGPTWLPPKQPEPSRLPQGRSLPRGALGPPTAHGATLQPHPR) is disordered. Asymmetric dimethylarginine; alternate is present on Arg25. Residue Arg25 is modified to Omega-N-methylarginine; alternate. Tyr55 is subject to Phosphotyrosine; by SRC. Residues 57 to 84 (PPGVPEDRGPTWVGSHGTPQRLQGLPPD) are disordered. Ser92 bears the Phosphoserine mark. Positions 107–134 (LDGGRSHAPRRPDRQAFEAPPPHAYRGG) are disordered. Residues 108 to 122 (DGGRSHAPRRPDRQA) show a composition bias toward basic and acidic residues. An omega-N-methylarginine mark is found at Arg111, Arg183, and Arg190. Phosphoserine is present on Ser193. 2 positions are modified to omega-N-methylarginine: Arg209 and Arg242. Residues 218–257 (RSHREPGPGVPEGPSGVHIPAGGGRGGGHEPQGPLGQPPE) are disordered. Residues 238–247 (AGGGRGGGHE) show a composition bias toward gly residues. LIM zinc-binding domains are found at residues 281-339 (GRCG…YVAT), 341-401 (EKCS…KFAP), and 404-471 (SVCG…RIQE). The interval 473–480 (SATVTTDC) is interaction with MAGI1 and PTPN13.

The protein belongs to the zyxin/ajuba family. Specifically interacts with the ligand binding domain of the thyroid receptor (TR) in the presence of thyroid hormone. Interacts (via the third LIM domain and C-terminus) with PTPN13 (via the second PDZ domain). Interacts (via the second LIM domain or via the third LIM domain plus C-terminus) with PDLIM4 (via PDZ domain). Found in a complex with PTPN13 and PDLIM4. Interacts with SVIL isoform 2. Interacts with LPAR2 but not other LPA receptors. Interacts with PRKAA2. Interacts with MAGI1. Interacts with SCRIB. In case of infection, interacts with S.typhimurium protein sseI. In terms of processing, phosphorylation at Tyr-55 by SRC is required for enhancement of lysophosphatidic acid-induced cell migration. Tyr-55 is dephosphorylated by PTPN13. Highly expressed in kidney, stomach, lung, heart and testis. Low expression levels in brain, colon, thymus, pancreas and skin. Not expressed in skeletal muscle.

It localises to the cytoplasm. Its subcellular location is the cytoskeleton. The protein localises to the cell junction. It is found in the focal adhesion. The protein resides in the nucleus. Its function is as follows. Relays signals from the cell surface to the nucleus to weaken adherens junction and promote actin cytoskeleton reorganization and cell invasiveness. Involved in lysophosphatidic acid-induced cell adhesion and migration. Acts as a transcriptional coactivator for NF-kappa-B and JUN, and mediates the transrepression of these transcription factors induced by glucocorticoid receptor. The sequence is that of Thyroid receptor-interacting protein 6 (Trip6) from Mus musculus (Mouse).